The primary structure comprises 359 residues: Probable deacetylase AF_0130 (359 aa).

The active-site Proton donor/acceptor is His-126. 3 residues coordinate Zn(2+): Asp-162, His-164, and Asp-249.

It belongs to the histone deacetylase family. Zn(2+) is required as a cofactor.

Its function is as follows. Probable deacetylase. This Archaeoglobus fulgidus (strain ATCC 49558 / DSM 4304 / JCM 9628 / NBRC 100126 / VC-16) protein is Probable deacetylase AF_0130.